The primary structure comprises 455 residues: EP1-like glycoprotein 2 (455 aa).

An N-terminal signal peptide occupies residues 1–22; the sequence is MSRFAILVTLALAIATVSVVIA. The region spanning 44-163 is the Bulb-type lectin domain; the sequence is EYDASYRFIE…NGKFVWQSFD (120 aa). Residues asparagine 56, asparagine 106, asparagine 191, asparagine 211, asparagine 241, and asparagine 289 are each glycosylated (N-linked (GlcNAc...) asparagine). Position 374 is an S-nitrosocysteine (cysteine 374). One can recognise a PAN domain in the interval 374-455; sequence CSGVKGKTVN…NTSSVAYIKY (82 aa). Cystine bridges form between cysteine 410–cysteine 432 and cysteine 414–cysteine 420. Asparagine 446 is a glycosylation site (N-linked (GlcNAc...) asparagine).

It localises to the secreted. It is found in the cell wall. The protein is EP1-like glycoprotein 2 of Arabidopsis thaliana (Mouse-ear cress).